The sequence spans 73 residues: Excelsatoxin A (73 aa).

The N-terminal stretch at 1–20 (MRFALVAAITIALLVAGSVA) is a signal peptide. Positions 21-37 (DESSEDIDNIVIKTPLD) are excised as a propeptide. 3 disulfide bridges follow: C41-C58, C46-C60, and C54-C69.

The protein belongs to the gympietide family. Expressed in trichomes, that are stiff epidermal hairs located on the surface of petioles and leaves. Not expressed in other aerial parts.

The protein resides in the secreted. Neurotoxin certainly responsible for the defensive, persistent, and painful stings of the giant stinging tree. Inhibits inactivation of Nav1.7/SCN9A sodium channel in sensory neurons by directly interacting with TMEM233, a newly described Nav-interacting protein. Has virtually no effect on Nav1.7/SCN9A function in heterologous expression systems and in neurons that do not express TMEM233. Also weakly but significantly affects Nav1.8/SCN10A. Coexpression of TMEM233 with Nav also confers ExTxA sensitivity to Nav1.1-Nav1.6. On the Nav1.7/SCN9A channel, causes a significant hyperpolarizing shift in the voltage dependence of activation. Its effects on Nav currents are irreversible, with no apparent reduction in activity even after repeated wash steps over 30 minutes. Does not show activity on Nav1.9/SCN11A. Does not show insecticidal activities. In vivo, induces nocifensive behavior in mice (licking or biting and shaking or lifting of the affected paw) lasting for approximately 1 hour. The protein is Excelsatoxin A of Dendrocnide excelsa (Giant stinging tree).